Reading from the N-terminus, the 289-residue chain is Acetyl-coenzyme A carboxylase carboxyl transferase subunit beta (289 aa).

The 256-residue stretch at 34–289 (MWVKCNKCGE…KLINMHQNSF (256 aa)) folds into the CoA carboxyltransferase N-terminal domain. Cys-38, Cys-41, Cys-57, and Cys-60 together coordinate Zn(2+). The C4-type zinc-finger motif lies at 38 to 60 (CNKCGEILYQNDLEKNYMVCNLC).

Belongs to the AccD/PCCB family. As to quaternary structure, acetyl-CoA carboxylase is a heterohexamer composed of biotin carboxyl carrier protein (AccB), biotin carboxylase (AccC) and two subunits each of ACCase subunit alpha (AccA) and ACCase subunit beta (AccD). It depends on Zn(2+) as a cofactor.

The protein resides in the cytoplasm. It catalyses the reaction N(6)-carboxybiotinyl-L-lysyl-[protein] + acetyl-CoA = N(6)-biotinyl-L-lysyl-[protein] + malonyl-CoA. The protein operates within lipid metabolism; malonyl-CoA biosynthesis; malonyl-CoA from acetyl-CoA: step 1/1. Its function is as follows. Component of the acetyl coenzyme A carboxylase (ACC) complex. Biotin carboxylase (BC) catalyzes the carboxylation of biotin on its carrier protein (BCCP) and then the CO(2) group is transferred by the transcarboxylase to acetyl-CoA to form malonyl-CoA. The chain is Acetyl-coenzyme A carboxylase carboxyl transferase subunit beta from Clostridium botulinum (strain ATCC 19397 / Type A).